Reading from the N-terminus, the 348-residue chain is Probable dual-specificity RNA methyltransferase RlmN (348 aa).

Catalysis depends on Glu93, which acts as the Proton acceptor. In terms of domain architecture, Radical SAM core spans Thr99–Asn323. Residues Cys106 and Cys338 are joined by a disulfide bond. [4Fe-4S] cluster is bound by residues Cys113, Cys117, and Cys120. S-adenosyl-L-methionine-binding positions include Gly160 to Glu161, Ser190, Ser219 to His221, and Asn295. The active-site S-methylcysteine intermediate is Cys338.

It belongs to the radical SAM superfamily. RlmN family. It depends on [4Fe-4S] cluster as a cofactor.

Its subcellular location is the cytoplasm. It catalyses the reaction adenosine(2503) in 23S rRNA + 2 reduced [2Fe-2S]-[ferredoxin] + 2 S-adenosyl-L-methionine = 2-methyladenosine(2503) in 23S rRNA + 5'-deoxyadenosine + L-methionine + 2 oxidized [2Fe-2S]-[ferredoxin] + S-adenosyl-L-homocysteine. The catalysed reaction is adenosine(37) in tRNA + 2 reduced [2Fe-2S]-[ferredoxin] + 2 S-adenosyl-L-methionine = 2-methyladenosine(37) in tRNA + 5'-deoxyadenosine + L-methionine + 2 oxidized [2Fe-2S]-[ferredoxin] + S-adenosyl-L-homocysteine. Functionally, specifically methylates position 2 of adenine 2503 in 23S rRNA and position 2 of adenine 37 in tRNAs. The polypeptide is Probable dual-specificity RNA methyltransferase RlmN (Prochlorococcus marinus subsp. pastoris (strain CCMP1986 / NIES-2087 / MED4)).